We begin with the raw amino-acid sequence, 278 residues long: tRNA(Phe) (4-demethylwyosine(37)-C(7)) aminocarboxypropyltransferase (278 aa).

S-adenosyl-L-methionine contacts are provided by residues serine 109, arginine 116, glutamate 155, and 183-184; that span reads DN.

The protein belongs to the class I-like SAM-binding methyltransferase superfamily. TRM5/TYW2 family.

Its subcellular location is the cytoplasm. The catalysed reaction is 4-demethylwyosine(37) in tRNA(Phe) + S-adenosyl-L-methionine = 4-demethyl-7-[(3S)-3-amino-3-carboxypropyl]wyosine(37) in tRNA(Phe) + S-methyl-5'-thioadenosine + H(+). Functionally, S-adenosyl-L-methionine-dependent transferase that acts as a component of the wyosine derivatives biosynthesis pathway. Catalyzes the transfer of the alpha-amino-alpha-carboxypropyl (acp) group from S-adenosyl-L-methionine to 4-demethylwyosine (imG-14), forming 7-aminocarboxypropyl-demethylwyosine (wybutosine-86) at position 37 of tRNA(Phe). This Pyrococcus horikoshii (strain ATCC 700860 / DSM 12428 / JCM 9974 / NBRC 100139 / OT-3) protein is tRNA(Phe) (4-demethylwyosine(37)-C(7)) aminocarboxypropyltransferase.